Consider the following 150-residue polypeptide: SsrA-binding protein (150 aa).

It belongs to the SmpB family.

The protein localises to the cytoplasm. Its function is as follows. Required for rescue of stalled ribosomes mediated by trans-translation. Binds to transfer-messenger RNA (tmRNA), required for stable association of tmRNA with ribosomes. tmRNA and SmpB together mimic tRNA shape, replacing the anticodon stem-loop with SmpB. tmRNA is encoded by the ssrA gene; the 2 termini fold to resemble tRNA(Ala) and it encodes a 'tag peptide', a short internal open reading frame. During trans-translation Ala-aminoacylated tmRNA acts like a tRNA, entering the A-site of stalled ribosomes, displacing the stalled mRNA. The ribosome then switches to translate the ORF on the tmRNA; the nascent peptide is terminated with the 'tag peptide' encoded by the tmRNA and targeted for degradation. The ribosome is freed to recommence translation, which seems to be the essential function of trans-translation. The sequence is that of SsrA-binding protein from Rubrobacter xylanophilus (strain DSM 9941 / JCM 11954 / NBRC 16129 / PRD-1).